A 250-amino-acid polypeptide reads, in one-letter code: Uracil-DNA glycosylase (250 aa).

Residue aspartate 78 is the Proton acceptor of the active site.

The protein belongs to the uracil-DNA glycosylase (UDG) superfamily. UNG family.

The protein localises to the cytoplasm. It catalyses the reaction Hydrolyzes single-stranded DNA or mismatched double-stranded DNA and polynucleotides, releasing free uracil.. Its function is as follows. Excises uracil residues from the DNA which can arise as a result of misincorporation of dUMP residues by DNA polymerase or due to deamination of cytosine. In Albidiferax ferrireducens (strain ATCC BAA-621 / DSM 15236 / T118) (Rhodoferax ferrireducens), this protein is Uracil-DNA glycosylase.